We begin with the raw amino-acid sequence, 280 residues long: Transcription factor MYB60 (280 aa).

2 consecutive HTH myb-type domains span residues 9 to 65 and 66 to 116; these read KIGI…RPGI and KRGN…KKKL. DNA-binding regions (H-T-H motif) lie at residues 37 to 61 and 89 to 112; these read WRSV…TNYL and WASI…NTHL. S-nitrosocysteine occurs at positions 49 and 53. A compositionally biased stretch (basic and acidic residues) spans 118 to 127; the sequence is KSDSDERSRS. 2 disordered regions span residues 118–149 and 204–247; these read KSDS…TYAS and EEGH…NATP. Positions 128 to 149 are enriched in polar residues; sequence ENIALQTSSTRNTINHRSTYAS.

As to expression, specifically expressed in guard cells. Present in seedlings, leaves, stems and flowers.

It localises to the nucleus. Its function is as follows. Transcription factor involved in the regulation of gene (e.g. drought-regulated and flavonoid biosynthetic genes) expression and stomatal movements leading to negative regulation of responses to drought and responses to other physiological stimuli (e.g. light). Promotes guard cell deflation in response to water deficit. Triggers root growth upon osmotic stress (e.g. mannitol containing medium). In Arabidopsis thaliana (Mouse-ear cress), this protein is Transcription factor MYB60.